We begin with the raw amino-acid sequence, 513 residues long: Cytochrome P450 4d10 (513 aa).

2 residues coordinate heme: Glu317 and Cys457.

This sequence belongs to the cytochrome P450 family. Requires heme as cofactor.

The protein resides in the endoplasmic reticulum membrane. Its subcellular location is the microsome membrane. In terms of biological role, may play an important role in the maintenance of specific insect-host plant relationships. May be involved in xenobiotic metabolism. The polypeptide is Cytochrome P450 4d10 (Cyp4d10) (Drosophila mettleri (Fruit fly)).